Reading from the N-terminus, the 397-residue chain is Tubby-like protein 8 (397 aa).

Residues 1–16 (MAGSRKVNDLLEENKG) are compositionally biased toward basic and acidic residues. Residues 1–46 (MAGSRKVNDLLEENKGNVDTITGSLSTQKGEDKENVSPEKVSTSVE) are disordered. The span at 17–28 (NVDTITGSLSTQ) shows a compositional bias: polar residues.

This sequence belongs to the TUB family. As to expression, mostly expressed in roots, flowers and siliques.

This chain is Tubby-like protein 8, found in Arabidopsis thaliana (Mouse-ear cress).